Here is a 297-residue protein sequence, read N- to C-terminus: Inosose dehydratase (297 aa).

Belongs to the IolE/MocC family. Requires glutathione as cofactor. The cofactor is Co(2+). It depends on Mn(2+) as a cofactor.

It catalyses the reaction scyllo-inosose = 3D-3,5/4-trihydroxycyclohexane-1,2-dione + H2O. It functions in the pathway polyol metabolism; myo-inositol degradation into acetyl-CoA; acetyl-CoA from myo-inositol: step 2/7. Catalyzes the dehydration of inosose (2-keto-myo-inositol, 2KMI or 2,4,6/3,5-pentahydroxycyclohexanone) to 3D-(3,5/4)-trihydroxycyclohexane-1,2-dione (D-2,3-diketo-4-deoxy-epi-inositol). This is Inosose dehydratase from Clostridium perfringens (strain ATCC 13124 / DSM 756 / JCM 1290 / NCIMB 6125 / NCTC 8237 / Type A).